The chain runs to 605 residues: Elongation factor 4 (605 aa).

The 184-residue stretch at 9–192 folds into the tr-type G domain; it reads NRIRNFCIIA…AIVQRIPAPA (184 aa). Residues 21–26 and 139–142 contribute to the GTP site; these read DHGKST and NKID.

The protein belongs to the TRAFAC class translation factor GTPase superfamily. Classic translation factor GTPase family. LepA subfamily.

It localises to the cell inner membrane. The catalysed reaction is GTP + H2O = GDP + phosphate + H(+). Functionally, required for accurate and efficient protein synthesis under certain stress conditions. May act as a fidelity factor of the translation reaction, by catalyzing a one-codon backward translocation of tRNAs on improperly translocated ribosomes. Back-translocation proceeds from a post-translocation (POST) complex to a pre-translocation (PRE) complex, thus giving elongation factor G a second chance to translocate the tRNAs correctly. Binds to ribosomes in a GTP-dependent manner. This Pelodictyon phaeoclathratiforme (strain DSM 5477 / BU-1) protein is Elongation factor 4.